Consider the following 7705-residue polypeptide: Copine family protein 2 (7705 aa).

9 disordered regions span residues 1-61 (MNDY…RHSE), 269-360 (KEGN…NNSQ), 372-408 (SERK…HQQP), 464-492 (GDRA…TSSV), 506-538 (STEP…TADG), 560-614 (DERA…QGPP), 1301-1358 (NRSE…DQQV), 4381-4427 (ELEP…RSES), and 6779-6800 (RDEH…GKFT). Residues 12–25 (SSQKSNNQKISNNS) are compositionally biased toward low complexity. The span at 269–282 (KEGNNPSCCRERGT) shows a compositional bias: basic and acidic residues. Over residues 302–313 (STSTKVAVTSAS) the composition is skewed to low complexity. The segment covering 318 to 336 (IKDHKKQLKKEKEKKKKMD) has biased composition (basic residues). Residues 372-404 (SERKTAKQREQELLQRSERRSGGRTHSHEEYRR) show a composition bias toward basic and acidic residues. Positions 522 to 532 (ASLSSVQQKQP) are enriched in polar residues. Positions 560–587 (DERAKDFLRGDRSSRLSPQSERKNERQI) are enriched in basic and acidic residues. A compositionally biased stretch (polar residues) spans 588–597 (QIRQQSSGPT). 2 stretches are compositionally biased toward basic and acidic residues: residues 598–611 (NRRE…EKRQ) and 1301–1335 (NRSE…HTSE). Over residues 4397-4409 (RQSRVYRSSSQVR) the composition is skewed to low complexity. 2 stretches are compositionally biased toward basic and acidic residues: residues 4411-4427 (PSEE…RSES) and 6779-6797 (RDEH…RDGG). The VWFA domain occupies 7475–7673 (NLIFGIDYTK…FHKVMFNAPN (199 aa)).

This sequence belongs to the copine family. Expressed in body wall muscle.

The protein is Copine family protein 2 (cpna-2) of Caenorhabditis elegans.